The sequence spans 587 residues: Prolycopene isomerase 2, chloroplastic (587 aa).

Residues methionine 1–valine 50 constitute a chloroplast transit peptide.

Belongs to the carotenoid/retinoid oxidoreductase family. CrtISO subfamily. Requires NAD(+) as cofactor. NADP(+) is required as a cofactor. It depends on FAD as a cofactor. As to expression, up-regulated in the flower buds and flower lip tissue, while it is weakly expressed in leaves.

It is found in the plastid. The protein localises to the chloroplast membrane. It catalyses the reaction 7,7',9,9'-tetra-cis-lycopene = all-trans-lycopene. It functions in the pathway carotenoid biosynthesis; lycopene biosynthesis. Functionally, carotene cis-trans-isomerase that converts 7,9,9'-tri-cis-neurosporene to 9'-cis-neurosporene and 7,9,9',7'-tetra-cis-lycopene (also known as prolycopene) into all-trans-lycopene. Isomerization requires redox-active components, suggesting that isomerization is achieved by a reversible redox reaction acting at specific double bonds. Isomerizes adjacent cis-double bonds at C7 and C9 pairwise into the trans-configuration, but is incapable of isomerizing single cis-double bonds at C9 and C9'. This chain is Prolycopene isomerase 2, chloroplastic (CRTISO2), found in Oncidium hybrid cultivar (Orchid).